The sequence spans 887 residues: Multiple RNA-binding domain-containing protein 1 (887 aa).

Residues 2–94 enclose the RRM 1 domain; that stretch reads SRIIVKGLPV…SKIEVSMAKS (93 aa). Disordered regions lie at residues 121–143, 203–276, and 297–336; these read KLLQ…NIDD, KEEN…RNLA, and SEAE…DEEL. 2 positions are modified to phosphoserine: S220 and S264. Residues 264–276 are compositionally biased toward basic and acidic residues; sequence SDEKENEKRRNLA. The span at 306-315 shows a compositional bias: polar residues; that stretch reads SSYATEQNES. The span at 316–325 shows a compositional bias: basic and acidic residues; sequence LDTKKEEQPE. 4 consecutive RRM domains span residues 345 to 423, 532 to 604, 663 to 746, and 763 to 840; these read GRLF…PGEE, KVIL…RGPK, VSIF…LSHR, and GKII…YAEE. The tract at residues 864–887 is disordered; the sequence is EMAALRNGGGRKKLDVDDEENEGF.

Belongs to the RRM MRD1 family. In terms of assembly, interacts with NOP1. Binds to the 35S pre-rRNA and the U3 snoRNA.

It is found in the nucleus. Its function is as follows. Involved in pre-rRNA processing. Required for maintaining steady-state levels of 40S ribosomal subunit. Required for the initial processing of pre-rRNA at the A0 to A2 sites, leading to the processing of the 23S pre-rRNA intermediate to the 18S rRNA. This is Multiple RNA-binding domain-containing protein 1 (MRD1) from Saccharomyces cerevisiae (strain ATCC 204508 / S288c) (Baker's yeast).